We begin with the raw amino-acid sequence, 2822 residues long: Piezo-type mechanosensitive ion channel component 2 (2822 aa).

The Cytoplasmic segment spans residues 1–12 (MASEVVCGLIFR). Residues 13-24 (LLLPICLAVACA) form a helical membrane-spanning segment. Residues 25-30 (FRYNGL) are Extracellular-facing. The helical transmembrane segment at 31–43 (SFVYLIYLLLIPL) threads the bilayer. Residues 44-50 (FSEPTKA) lie on the Cytoplasmic side of the membrane. Residues 51–76 (TMQGHTGRLLQSLCITSLSFLLLHII) traverse the membrane as a helical segment. The Extracellular segment spans residues 77 to 122 (FHITLASLEAQHRITPAYNCSTWEKTFRQIGFESLKGADAGNGIRV). N-linked (GlcNAc...) asparagine glycosylation is present at Asn-95. A helical membrane pass occupies residues 123 to 141 (FVPDIGMFIASLTIWLVCR). Residues 142–221 (TIVKKPDTEE…KEFIGNMITT (80 aa)) are Cytoplasmic-facing. Residues 222 to 237 (AGKVVVTILLGSSGMM) traverse the membrane as a helical segment. Residues 238-240 (LPS) lie on the Extracellular side of the membrane. A helical transmembrane segment spans residues 241-258 (LTSAVYFFVFLGLCTWWS). At 259–264 (WCRTFD) the chain is on the cytoplasmic side. A helical membrane pass occupies residues 265 to 287 (PLLFGCLCVLLAIFTAGHLIGLY). The Extracellular segment spans residues 288–335 (LYQFQFFQEAVPPNDYYARLFGIKSVIQTDCASTWKIIVNPDLSWYHH). The helical transmembrane segment at 336–355 (ANPILLLVMYYTLATLIRIW) threads the bilayer. The Cytoplasmic segment spans residues 356–492 (LQEPLVQEEM…SVRMHAMVAV (137 aa)). Residues 450 to 481 (YRWEPSEESSEKKEEEEDKREDSEGEGSQEEK) are disordered. The stretch at 455-482 (SEESSEKKEEEEDKREDSEGEGSQEEKR) forms a coiled coil. Residues 463 to 477 (EEEEDKREDSEGEGS) show a composition bias toward acidic residues. Residues 493–514 (FQFIMKQSYICALIAMMAWSIT) form a helical membrane-spanning segment. Over 515–519 (YHSWL) the chain is Extracellular. A helical membrane pass occupies residues 520-531 (TFVLLIWSCTLW). Residues 532–535 (MIRN) are Cytoplasmic-facing. A helical membrane pass occupies residues 536 to 562 (RRKYAMISSPFMVVYANLLLVLQYIWS). Residues 563 to 583 (FELPEIKKVPGFLEKKEPGEL) lie on the Extracellular side of the membrane. Residues 584 to 614 (ASKILFTITFWLLLRQHLTEQKALREKEALL) form a helical membrane-spanning segment. Over 615–689 (SEVKIGSQEL…GNLVVALFIK (75 aa)) the chain is Cytoplasmic. Composition is skewed to acidic residues over residues 624-633 (LEEKEDEELQ) and 643-652 (EKEEEEEEEI). The tract at residues 624 to 668 (LEEKEDEELQDVQVEGEPTEKEEEEEEEIKEERHEVKKEEEEEVE) is disordered. Residues 653-662 (KEERHEVKKE) are compositionally biased toward basic and acidic residues. The chain crosses the membrane as a helical span at residues 690–703 (YWIYVCGGMFFFVS). At 704–709 (FEGKIV) the chain is on the extracellular side. The helical transmembrane segment at 710–728 (MYKIIYMVLFLFCVALYQV) threads the bilayer. At 729–737 (HYEWWRKIL) the chain is on the cytoplasmic side. A helical transmembrane segment spans residues 738–757 (KYFWMSVVIYTMLVLIFIYT). The Extracellular portion of the chain corresponds to 758–789 (YQFENFPGLWQNMTGLKKEKLEDLGLKQFTVA). A helical membrane pass occupies residues 790-811 (ELFTRIFIPTSFLLVCILHLHY). Topologically, residues 812-957 (FHDRFLELTD…QVFMWWILEL (146 aa)) are cytoplasmic. Ser-856 is modified (phosphoserine). Positions 875-901 (QKLAESGEERPEECVKKTEKGEAGKDS) are enriched in basic and acidic residues. Residues 875–919 (QKLAESGEERPEECVKKTEKGEAGKDSDESEEEEDEEEESEEEES) are disordered. A compositionally biased stretch (acidic residues) spans 902–919 (DESEEEEDEEEESEEEES). The helical transmembrane segment at 958–973 (HIIKIVSSYIIWVTVK) threads the bilayer. The Extracellular segment spans residues 974–979 (EVSLFN). Residues 980 to 989 (YVFLISWAFA) form a helical membrane-spanning segment. Residues 990–997 (LPYAKLRR) lie on the Cytoplasmic side of the membrane. The helical transmembrane segment at 998 to 1018 (AASSVCTVWTCVIIVCKMLYQ) threads the bilayer. The Extracellular segment spans residues 1019–1074 (LQTIKPENFSVNCSLPNENQTNIPLHELNKSLLYSAPVDPTEWVGLRKSSPLLVYL). N-linked (GlcNAc...) asparagine glycosylation occurs at Asn-1030. Cys-1031 and Cys-1209 are disulfide-bonded. A helical membrane pass occupies residues 1075–1099 (RNNLLMLAILAFEVTVYRHQEYYRG). The Cytoplasmic portion of the chain corresponds to 1100–1140 (RNNLTAPVSKTIFHDITRLHLDDGLINCAKYFVNYFFYKFG). The chain crosses the membrane as a helical span at residues 1141 to 1155 (LETCFLMSVNVIGQR). The Extracellular segment spans residues 1156–1157 (MD). The chain crosses the membrane as a helical span at residues 1158–1171 (FYAMIHACWLIGVL). Over 1172-1182 (YRRRRKAIAEV) the chain is Cytoplasmic. A helical membrane pass occupies residues 1183 to 1202 (WPKYCCFLACIITFQYFVCI). At 1203–1239 (GIPPAPCRDYPWRFKGAYFNDNIIKWLYFPDFIVRPN) the chain is on the extracellular side. Residues 1240-1260 (PVFLVYDFMLLLCASLQRQIF) traverse the membrane as a helical segment. Over 1261–1314 (EDENKAAVRIMAGDNVEICMNLDAASFSQHNPVPDFIHCRSYLDMSKVIIFSYL) the chain is Cytoplasmic. A helical membrane pass occupies residues 1315-1327 (FWFVLTIIFITGT). Topologically, residues 1328-1333 (TRISIF) are extracellular. Residues 1334 to 1346 (CMGYLVACFYFLL) form a helical membrane-spanning segment. Over 1347–1355 (FGGDLLLKP) the chain is Cytoplasmic. The helical transmembrane segment at 1356-1381 (IKSILRYWDWLIAYNVFVITMKNILS) threads the bilayer. Over 1382–1430 (IGACGYIGALVRNSCWLIQAFSLACTVKGYQMPEDDSRCKLPSGEAGII) the chain is Extracellular. The helical transmembrane segment at 1431–1447 (WDSICFAFLLLQRRVFM) threads the bilayer. Residues 1448–1991 (SYYFLHVVAD…YAMYNTLVAR (544 aa)) are Cytoplasmic-facing. A coiled-coil region spans residues 1475–1515 (TIVKAVKARIEEEKKSMDQLKRQMDRIKARQQKYKKGKERM). Disordered stretches follow at residues 1505 to 1551 (QQKY…KKKQ) and 1611 to 1653 (LRQR…KKSD). A compositionally biased stretch (basic residues) spans 1611–1621 (LRQRRKEKKKL). A compositionally biased stretch (basic and acidic residues) spans 1622-1633 (AREEQKERRKGS). A helical transmembrane segment spans residues 1992-2006 (SEMVCYFVIILNHMT). The Extracellular portion of the chain corresponds to 2007–2013 (SASIITL). The helical transmembrane segment at 2014–2025 (LLPILIFLWAML) threads the bilayer. Residues 2026-2031 (SVPRPS) lie on the Cytoplasmic side of the membrane. Residues 2032–2053 (RRFWMMAIVYTEVAIVVKYFFQ) form a helical membrane-spanning segment. Over 2054 to 2086 (FGFFPWNKDLEIYKERPYFPPNIIGVEKKEGYV) the chain is Extracellular. The helical transmembrane segment at 2087–2105 (LYDLIQLLALFFHRSILKC) threads the bilayer. Topologically, residues 2106–2259 (HGLWDEDDIV…HPDYSAVTDV (154 aa)) are cytoplasmic. 2 disordered regions span residues 2120–2139 (DKEG…GSSD) and 2164–2205 (IRRK…SVLS). A compositionally biased stretch (low complexity) spans 2170–2197 (CSSSQISPRSSFSSNRSKRGSTSTRNSS). A helical membrane pass occupies residues 2260–2279 (YVLMFLADTVDFIIIVFGFW). At 2280-2301 (AFGKHSAAADITSSLSEDQVPG) the chain is on the extracellular side. A helical membrane pass occupies residues 2302-2322 (PFLVMVLIQFGTMVVDRALYL). The Cytoplasmic segment spans residues 2323–2326 (RKTV). Residues 2327–2350 (LGKVIFQVILVFGIHFWMFFILPG) traverse the membrane as a helical segment. Residues 2351-2359 (VTERKFSQN) lie on the Extracellular side of the membrane. A helical transmembrane segment spans residues 2360 to 2382 (LVAQLWYFVKCVYFGLSAYQIRC). Residues 2383–2467 (GYPTRVLGNF…YPQPRGQKKK (85 aa)) are Cytoplasmic-facing. Residues 2468-2491 (KAVKYGMGGMIIVLLICIVWFPLL) traverse the membrane as a helical segment. Residues 2492 to 2739 (FMSLIKSVAG…PSLGFLAGYG (248 aa)) lie on the Extracellular side of the membrane. Asn-2692 is a glycosylation site (N-linked (GlcNAc...) asparagine). A helical transmembrane segment spans residues 2740-2760 (IMGLYASVVLVIGKFVREFFS). Topologically, residues 2761–2822 (GISHSIMFEE…MIKWTREKTN (62 aa)) are cytoplasmic.

This sequence belongs to the PIEZO (TC 1.A.75) family. Homotrimer; the homotrimer forms a propeller-shaped Piezo channel with a cation-ion conducting pore. Heterotrimeric interaction may occur between PIEZO1 and PIEZO2. Interacts with STOM13. Interacts with TMC7; the interaction inhibits PIEZO2-conducted mechanically activated currents. Interacts with TMC1; the interaction may be part of the MET complex. Interacts with MDFIC (via C-terminus); the interaction prolongs Piezo channel inactivation. Interacts with MDFI (via C-terminus); the interaction prolongs Piezo channel inactivation. As to expression, expressed in bladder, colon, and lung, but less abundant in kidney or skin. Strong expression is observed in dorsal root ganglia (DRG) sensory neurons. Expressed in a wide range of cutaneous low-threshold mechanoreceptors (LTMRs), including Merkel cells and Meissner's corpuscles. Expressed in sensory neurons. Expressed in cochlear inner and outer hair cells and vestibular organ hair cells. Expressed in pulmonary neuroepithelial cell bodies. Expressed in bladder urothelium and sensory neurons of the lower urinary tract. Expressed in sensory endings of proprioceptors innervating muscle spindles and Golgi tendon organs.

The protein resides in the cell membrane. The enzyme catalyses Ca(2+)(in) = Ca(2+)(out). Its activity is regulated as follows. Regulated by auxillary subunits MDFIC and MDFI. Channel activity is inhibited by TMEM120aa. Phosphatidic acid and lysophosphatidic acid inhibit Piezo2 channel activity. In terms of biological role, pore-forming subunit of the mechanosensitive non-specific cation Piezo channel required for rapidly adapting mechanically activated (MA) currents and has a key role in sensing touch and tactile pain. Piezo channels are homotrimeric three-blade propeller-shaped structures that utilize a cap-motion and plug-and-latch mechanism to gate their ion-conducting pathways. Expressed in sensory neurons, is essential for diverse physiological processes, including respiratory control, systemic metabolism, urinary function, and proprioception. Mediates airway stretch sensing, enabling efficient respiration at birth and maintaining normal breathing in adults. It regulates brown and beige adipose tissue morphology and function, preventing systemic hypermetabolism. In the lower urinary tract, acts as a sensor in both the bladder urothelium and innervating sensory neurons and is required for bladder-stretch sensing and urethral micturition reflexes, ensuring proper urinary function. Additionally, Piezo2 serves as the principal mechanotransducer in proprioceptors, facilitating proprioception and coordinated body movements. In inner ear hair cells, PIEZO1/2 subunits may constitute part of the mechanotransducer (MET) non-selective cation channel complex where they may act as pore-forming ion-conducting component in the complex. Required for Merkel-cell mechanotransduction. Plays a major role in light-touch mechanosensation. This chain is Piezo-type mechanosensitive ion channel component 2, found in Mus musculus (Mouse).